Here is a 910-residue protein sequence, read N- to C-terminus: DNA repair and recombination protein RAD54B (910 aa).

The segment covering Met1 to Ser14 has biased composition (polar residues). A disordered region spans residues Met1 to Glu33. A Phosphoserine modification is found at Ser14. Residues Gly313–Gly480 enclose the Helicase ATP-binding domain. Asp326–Thr333 serves as a coordination point for ATP. The DEGH box signature appears at Asp431–His434. A Helicase C-terminal domain is found at Lys649–Lys810.

The protein belongs to the SNF2/RAD54 helicase family. As to quaternary structure, interacts with RAD51 through the NH2-terminal domain. Immunoprecipitation experiments show that the interaction is constitutive and not induced by ionizing radiation. The interaction may be indirect. As to expression, abundantly expressed in testis and spleen. Relatively low levels observed in thymus, prostate, ovary and colon.

It localises to the nucleus. Its function is as follows. Involved in DNA repair and mitotic recombination. May play an active role in recombination processes in concert with other members of the RAD52 epistasis group. The chain is DNA repair and recombination protein RAD54B (RAD54B) from Homo sapiens (Human).